The chain runs to 278 residues: HTH-type transcriptional regulator HdfR (278 aa).

The HTH lysR-type domain occupies 1–58 (MDTELLKTFLEVSRTRHFGRAAEALYLTQSAVSFRIRQLENQLGVNLFTRHRNNIRLT). The H-T-H motif DNA-binding region spans 18–37 (FGRAAEALYLTQSAVSFRIR).

Belongs to the LysR transcriptional regulatory family.

Functionally, negatively regulates the transcription of the flagellar master operon flhDC by binding to the upstream region of the operon. This Salmonella schwarzengrund (strain CVM19633) protein is HTH-type transcriptional regulator HdfR.